A 428-amino-acid polypeptide reads, in one-letter code: Ribulose bisphosphate carboxylase (428 aa).

The active-site Proton acceptor is Lys151. Lys153 provides a ligand contact to substrate. 3 residues coordinate Mg(2+): Lys177, Asp179, and Glu180. The residue at position 177 (Lys177) is an N6-carboxylysine. His270 functions as the Proton acceptor in the catalytic mechanism. Substrate is bound by residues Arg271, His303, Ser354–Gly356, and Gln376–Gly379.

The protein belongs to the RuBisCO large chain family. Type III subfamily. As to quaternary structure, homodimer. In contrast to form I RuBisCO, the form III RuBisCO is composed solely of large subunits. Mg(2+) is required as a cofactor.

It catalyses the reaction 2 (2R)-3-phosphoglycerate + 2 H(+) = D-ribulose 1,5-bisphosphate + CO2 + H2O. It carries out the reaction D-ribulose 1,5-bisphosphate + O2 = 2-phosphoglycolate + (2R)-3-phosphoglycerate + 2 H(+). Reversibly inhibited by O(2). Catalyzes the addition of molecular CO(2) and H(2)O to ribulose 1,5-bisphosphate (RuBP), generating two molecules of 3-phosphoglycerate (3-PGA). Functions in an archaeal AMP degradation pathway, together with AMP phosphorylase and R15P isomerase. This chain is Ribulose bisphosphate carboxylase, found in Methanosarcina acetivorans (strain ATCC 35395 / DSM 2834 / JCM 12185 / C2A).